The primary structure comprises 627 residues: Glutamine--fructose-6-phosphate aminotransferase [isomerizing] (627 aa).

Residue cysteine 2 is the Nucleophile; for GATase activity of the active site. The Glutamine amidotransferase type-2 domain maps to 2–224 (CGIVGYIGTQ…NGEIARLTPL (223 aa)). 2 consecutive SIS domains span residues 293–442 (LPEN…HRQT) and 476–617 (LAHE…VDQP). Lysine 622 acts as the For Fru-6P isomerization activity in catalysis.

Homodimer.

The protein resides in the cytoplasm. It catalyses the reaction D-fructose 6-phosphate + L-glutamine = D-glucosamine 6-phosphate + L-glutamate. Functionally, catalyzes the first step in hexosamine metabolism, converting fructose-6P into glucosamine-6P using glutamine as a nitrogen source. This Nostoc sp. (strain PCC 9229) protein is Glutamine--fructose-6-phosphate aminotransferase [isomerizing].